Here is a 580-residue protein sequence, read N- to C-terminus: Pescadillo homolog (580 aa).

Acidic residues predominate over residues 291 to 303 (EPEEENEVDEFPA). The interval 291-321 (EPEEENEVDEFPADPENAGQEEEQKKQLQEE) is disordered. Positions 312 to 321 (EEQKKQLQEE) are enriched in basic and acidic residues. The BRCT domain maps to 323-416 (KHKSMFVGLK…MLLPVEDYFP (94 aa)). A disordered region spans residues 448–496 (KGENPEDDDDDDEEDDEDEEEDDEDEDDEENEEEEEDKKLRHLENKKVG). Acidic residues predominate over residues 452–483 (PEDDDDDDEEDDEDEEEDDEDEDDEENEEEEE). Residues 484–494 (DKKLRHLENKK) are compositionally biased toward basic and acidic residues.

Belongs to the pescadillo family. As to quaternary structure, component of the PeBoW complex, composed of bop1, pes1 and wdr12. The complex is held together by bop1, which interacts with pes1 via its N-terminal domain and with wdr12 via a high-affinity interaction between the seven-bladed beta-propeller domains of the 2 proteins. The PeBoW complex associates with the 66S pre-ribosome.

Its subcellular location is the nucleus. The protein localises to the nucleolus. The protein resides in the nucleoplasm. Functionally, component of the PeBoW complex, which is required for maturation of 28S and 5.8S ribosomal RNAs and formation of the 60S ribosome. This is Pescadillo homolog (pes1) from Xenopus tropicalis (Western clawed frog).